The primary structure comprises 231 residues: Histidine biosynthesis bifunctional protein HisIE (231 aa).

The tract at residues 1–130 (MQDVFRQIDW…QKYPIGVYHI (130 aa)) is phosphoribosyl-AMP cyclohydrolase. The phosphoribosyl-ATP pyrophosphohydrolase stretch occupies residues 131–231 (LDDLYHIIEQ…GIEEKASRKH (101 aa)).

It in the N-terminal section; belongs to the PRA-CH family. This sequence in the C-terminal section; belongs to the PRA-PH family.

It is found in the cytoplasm. It carries out the reaction 1-(5-phospho-beta-D-ribosyl)-ATP + H2O = 1-(5-phospho-beta-D-ribosyl)-5'-AMP + diphosphate + H(+). The catalysed reaction is 1-(5-phospho-beta-D-ribosyl)-5'-AMP + H2O = 1-(5-phospho-beta-D-ribosyl)-5-[(5-phospho-beta-D-ribosylamino)methylideneamino]imidazole-4-carboxamide. It participates in amino-acid biosynthesis; L-histidine biosynthesis; L-histidine from 5-phospho-alpha-D-ribose 1-diphosphate: step 2/9. The protein operates within amino-acid biosynthesis; L-histidine biosynthesis; L-histidine from 5-phospho-alpha-D-ribose 1-diphosphate: step 3/9. In Helicobacter hepaticus (strain ATCC 51449 / 3B1), this protein is Histidine biosynthesis bifunctional protein HisIE.